We begin with the raw amino-acid sequence, 475 residues long: Transmembrane protein 44 (475 aa).

Topologically, residues 1-29 (MGEAPSPAPALWDWDYLDRCFARHRVCIS) are extracellular. The chain crosses the membrane as a helical span at residues 30 to 50 (FGLWICASSCWIAAHALLLYL). Over 51–61 (RCAQKPRQDQS) the chain is Cytoplasmic. Residues 62 to 82 (ALCAACCLLTSLCDTVGALLA) traverse the membrane as a helical segment. Residues 83 to 88 (RQLTIQ) are Extracellular-facing. The helical transmembrane segment at 89 to 109 (VFTGAYLAAIDLVNFMFILFP) threads the bilayer. Residues 110–135 (VCGSKFKSNSDREARERKRRRQLRAS) are Cytoplasmic-facing. The helical transmembrane segment at 136–156 (VFALALPLSLGPCWALWVAVP) threads the bilayer. At 157-179 (KASATIRGPQRRLLASLLQENTE) the chain is on the extracellular side. Residues 180 to 200 (ILGYLLGSVAAFGSWASRIPP) traverse the membrane as a helical segment. Topologically, residues 201–259 (LSRIAPPPTLGITTQHEIWRGQMSKPSQSPSRSPSGHWRAAAQRQVLGTEMCRGKTFPS) are cytoplasmic. The helical transmembrane segment at 260-280 (IHLWTRLLSALAGLLYASAIV) threads the bilayer. Residues 281 to 294 (AHDQHPEYLLRATP) are Extracellular-facing. A helical membrane pass occupies residues 295 to 315 (WFLTSLGRAALDLAIIFLSCV). Residues 316 to 475 (MKSKMRQALG…VRTAHLSDDD (160 aa)) are Cytoplasmic-facing. The tract at residues 390–475 (SATRLPGDGQ…VRTAHLSDDD (86 aa)) is disordered. Residues 424–436 (SSGSSSEVSSINS) are compositionally biased toward low complexity. The span at 464 to 475 (DSVRTAHLSDDD) shows a compositional bias: basic and acidic residues. Serine 465 is modified (phosphoserine).

Its subcellular location is the membrane. The chain is Transmembrane protein 44 (TMEM44) from Homo sapiens (Human).